The sequence spans 158 residues: Cyclic pyranopterin monophosphate synthase (158 aa).

Residues 76–78 (LCH) and 114–115 (ME) each bind substrate. The active site involves aspartate 129.

Belongs to the MoaC family. In terms of assembly, homohexamer; trimer of dimers.

It carries out the reaction (8S)-3',8-cyclo-7,8-dihydroguanosine 5'-triphosphate = cyclic pyranopterin phosphate + diphosphate. It functions in the pathway cofactor biosynthesis; molybdopterin biosynthesis. In terms of biological role, catalyzes the conversion of (8S)-3',8-cyclo-7,8-dihydroguanosine 5'-triphosphate to cyclic pyranopterin monophosphate (cPMP). This chain is Cyclic pyranopterin monophosphate synthase, found in Shewanella frigidimarina (strain NCIMB 400).